The sequence spans 224 residues: Type VII secretion system protein EsaE (224 aa).

In terms of assembly, interacts with EssD.

Component of the type VII secretion system (Ess). Plays a role in Esx protein secretion. Plays an essential role in the processing and secretion of EssD. This Staphylococcus aureus (strain USA300) protein is Type VII secretion system protein EsaE.